Reading from the N-terminus, the 426-residue chain is Serine--tRNA ligase (426 aa).

233 to 235 is a binding site for L-serine; sequence TAE. 264–266 lines the ATP pocket; the sequence is RSE. Residue E287 coordinates L-serine. 351–354 lines the ATP pocket; that stretch reads EISS. S387 lines the L-serine pocket.

This sequence belongs to the class-II aminoacyl-tRNA synthetase family. Type-1 seryl-tRNA synthetase subfamily. As to quaternary structure, homodimer. The tRNA molecule binds across the dimer.

It localises to the cytoplasm. It carries out the reaction tRNA(Ser) + L-serine + ATP = L-seryl-tRNA(Ser) + AMP + diphosphate + H(+). It catalyses the reaction tRNA(Sec) + L-serine + ATP = L-seryl-tRNA(Sec) + AMP + diphosphate + H(+). Its pathway is aminoacyl-tRNA biosynthesis; selenocysteinyl-tRNA(Sec) biosynthesis; L-seryl-tRNA(Sec) from L-serine and tRNA(Sec): step 1/1. Catalyzes the attachment of serine to tRNA(Ser). Is also able to aminoacylate tRNA(Sec) with serine, to form the misacylated tRNA L-seryl-tRNA(Sec), which will be further converted into selenocysteinyl-tRNA(Sec). The polypeptide is Serine--tRNA ligase (Pseudomonas fluorescens (strain Pf0-1)).